Here is a 204-residue protein sequence, read N- to C-terminus: Dephospho-CoA kinase (204 aa).

In terms of domain architecture, DPCK spans 3–200 (VVAITGGIGS…ETYMAFASQQ (198 aa)). 11–16 (GSGKTT) is a binding site for ATP.

The protein belongs to the CoaE family.

It localises to the cytoplasm. The catalysed reaction is 3'-dephospho-CoA + ATP = ADP + CoA + H(+). The protein operates within cofactor biosynthesis; coenzyme A biosynthesis; CoA from (R)-pantothenate: step 5/5. Functionally, catalyzes the phosphorylation of the 3'-hydroxyl group of dephosphocoenzyme A to form coenzyme A. The sequence is that of Dephospho-CoA kinase from Aeromonas hydrophila.